The sequence spans 190 residues: Potassium-transporting ATPase KdpC subunit (190 aa).

The helical transmembrane segment at 15-35 (LWILTALIYPAIVLVIGQLVF) threads the bilayer.

This sequence belongs to the KdpC family. As to quaternary structure, the system is composed of three essential subunits: KdpA, KdpB and KdpC.

Its subcellular location is the cell inner membrane. Part of the high-affinity ATP-driven potassium transport (or Kdp) system, which catalyzes the hydrolysis of ATP coupled with the electrogenic transport of potassium into the cytoplasm. This subunit acts as a catalytic chaperone that increases the ATP-binding affinity of the ATP-hydrolyzing subunit KdpB by the formation of a transient KdpB/KdpC/ATP ternary complex. In Synechocystis sp. (strain ATCC 27184 / PCC 6803 / Kazusa), this protein is Potassium-transporting ATPase KdpC subunit.